The following is a 462-amino-acid chain: tRNA(Ile)-lysidine synthase (462 aa).

Residue Ser31–Ser36 coordinates ATP.

It belongs to the tRNA(Ile)-lysidine synthase family.

Its subcellular location is the cytoplasm. It catalyses the reaction cytidine(34) in tRNA(Ile2) + L-lysine + ATP = lysidine(34) in tRNA(Ile2) + AMP + diphosphate + H(+). In terms of biological role, ligates lysine onto the cytidine present at position 34 of the AUA codon-specific tRNA(Ile) that contains the anticodon CAU, in an ATP-dependent manner. Cytidine is converted to lysidine, thus changing the amino acid specificity of the tRNA from methionine to isoleucine. This is tRNA(Ile)-lysidine synthase from Ralstonia nicotianae (strain ATCC BAA-1114 / GMI1000) (Ralstonia solanacearum).